Consider the following 307-residue polypeptide: Mycothiol acetyltransferase (307 aa).

2 N-acetyltransferase domains span residues 15-158 (HTLD…LAEP) and 164-307 (VTVR…RTES). 1D-myo-inositol 2-(L-cysteinylamino)-2-deoxy-alpha-D-glucopyranoside is bound at residue Glu46. Residue 90–92 (LVV) participates in acetyl-CoA binding. 1D-myo-inositol 2-(L-cysteinylamino)-2-deoxy-alpha-D-glucopyranoside-binding residues include Glu191, Lys230, and Glu239. Residues 243-245 (VGV) and 250-256 (QGGGLGK) contribute to the acetyl-CoA site. Tyr277 lines the 1D-myo-inositol 2-(L-cysteinylamino)-2-deoxy-alpha-D-glucopyranoside pocket.

It belongs to the acetyltransferase family. MshD subfamily. In terms of assembly, monomer.

It carries out the reaction 1D-myo-inositol 2-(L-cysteinylamino)-2-deoxy-alpha-D-glucopyranoside + acetyl-CoA = mycothiol + CoA + H(+). Its function is as follows. Catalyzes the transfer of acetyl from acetyl-CoA to desacetylmycothiol (Cys-GlcN-Ins) to form mycothiol. This Streptomyces griseus subsp. griseus (strain JCM 4626 / CBS 651.72 / NBRC 13350 / KCC S-0626 / ISP 5235) protein is Mycothiol acetyltransferase.